The following is a 244-amino-acid chain: Acidic leucine-rich nuclear phosphoprotein 32 family member A (244 aa).

4 LRR repeats span residues 18–41 (DVKE…TDEF), 43–64 (GLEF…PKLN), 65–87 (KLKK…AEKC), and 89–110 (NLTH…EPLK). Residues 123 to 161 (CEVTNLNDYRENLFKLLPQLTYLDGYDRDDKEAPDSDAE) form the LRRCT domain. The tract at residues 148–244 (YDRDDKEAPD…DQDDEGEDDD (97 aa)) is disordered. Over residues 157–227 (DSDAEGYVEG…EEDEGDEEAE (71 aa)) the composition is skewed to acidic residues.

This sequence belongs to the ANP32 family. Post-translationally, phosphorylated on serine residues.

It localises to the nucleus. It is found in the cytoplasm. Its subcellular location is the endoplasmic reticulum. In terms of biological role, implicated in a number of cellular processes, including proliferation, differentiation, caspase-dependent and caspase-independent apoptosis, suppression of transformation (tumor suppressor), inhibition of protein phosphatase 2A, regulation of mRNA trafficking and stability, and inhibition of acetyltransferases as part of the INHAT (inhibitor of histone acetyltransferases) complex. In Xenopus laevis (African clawed frog), this protein is Acidic leucine-rich nuclear phosphoprotein 32 family member A (anp32a).